The sequence spans 156 residues: Small ribosomal subunit protein uS7 (156 aa).

It belongs to the universal ribosomal protein uS7 family. In terms of assembly, part of the 30S ribosomal subunit. Contacts proteins S9 and S11.

Its function is as follows. One of the primary rRNA binding proteins, it binds directly to 16S rRNA where it nucleates assembly of the head domain of the 30S subunit. Is located at the subunit interface close to the decoding center, probably blocks exit of the E-site tRNA. The protein is Small ribosomal subunit protein uS7 of Nitrosococcus oceani (strain ATCC 19707 / BCRC 17464 / JCM 30415 / NCIMB 11848 / C-107).